The following is an 899-amino-acid chain: Alanine--tRNA ligase (899 aa).

Zn(2+) is bound by residues His-595, His-599, Cys-703, and His-707.

The protein belongs to the class-II aminoacyl-tRNA synthetase family. Zn(2+) serves as cofactor.

The protein resides in the cytoplasm. It carries out the reaction tRNA(Ala) + L-alanine + ATP = L-alanyl-tRNA(Ala) + AMP + diphosphate. Its function is as follows. Catalyzes the attachment of alanine to tRNA(Ala) in a two-step reaction: alanine is first activated by ATP to form Ala-AMP and then transferred to the acceptor end of tRNA(Ala). Also edits incorrectly charged Ser-tRNA(Ala) and Gly-tRNA(Ala) via its editing domain. The polypeptide is Alanine--tRNA ligase (Caldivirga maquilingensis (strain ATCC 700844 / DSM 13496 / JCM 10307 / IC-167)).